The chain runs to 832 residues: Subtilisin-like protease SBT2.1 (832 aa).

A signal peptide spans 1-24; that stretch reads MDESSLVRFVFLLCLVSSSVFCLA. Positions 25-138 are cleaved as a propeptide — activation peptide; sequence ESDQNATVSS…VVLDFLVEKA (114 aa). Residues N29 and N73 are each glycosylated (N-linked (GlcNAc...) asparagine). Positions 36–136 constitute an Inhibitor I9 domain; it reads VYIVTLKDRP…ENVVLDFLVE (101 aa). The Peptidase S8 domain occupies 145 to 684; the sequence is FLGLPRGAWL…SGFVNATAAL (540 aa). The active-site Charge relay system is D172. The N-linked (GlcNAc...) asparagine glycan is linked to N233. H247 serves as the catalytic Charge relay system. N-linked (GlcNAc...) asparagine glycans are attached at residues N272, N315, N390, N417, N470, N515, and N522. A PA domain is found at 408-503; that stretch reads LVLATHALRN…MDIPGILISS (96 aa). The active-site Charge relay system is S609. N-linked (GlcNAc...) asparagine glycans are attached at residues N679, N705, N713, N723, N760, and N801.

The protein belongs to the peptidase S8 family.

It localises to the secreted. In Arabidopsis thaliana (Mouse-ear cress), this protein is Subtilisin-like protease SBT2.1.